The chain runs to 114 residues: Probable gas vesicle protein J2 (114 aa).

A compositionally biased stretch (basic and acidic residues) spans 1–10 (MTDLDHRYPG). Positions 1-21 (MTDLDHRYPGEETEPYGPPSG) are disordered.

It belongs to the gas vesicle GvpA family. In terms of assembly, interacts with GvpA.

It is found in the gas vesicle. Its function is as follows. A minor component of the gas vesicle, might be involved in nucleating gas vesicle formation. Gas vesicles (GV) are hollow, gas filled proteinaceous nanostructures. It is not clear what function GVs perform in soil bacteria. The protein is Probable gas vesicle protein J2 of Streptomyces coelicolor (strain ATCC BAA-471 / A3(2) / M145).